Consider the following 158-residue polypeptide: Probable inactive acireductone dioxygenase 2 (158 aa).

The protein belongs to the acireductone dioxygenase (ARD) family.

It localises to the cytoplasm. It is found in the nucleus. Probable inactive acireductone dioxygenase. This chain is Probable inactive acireductone dioxygenase 2, found in Caenorhabditis elegans.